We begin with the raw amino-acid sequence, 1793 residues long: Transposon Ty1-H Gag-Pol polyprotein (1793 aa).

Composition is skewed to polar residues over residues 1–10 (MESQQLSNYP), 48–60 (TKAN…TPAS), and 127–152 (QSQF…GNTF). Disordered regions lie at residues 1–84 (MESQ…QNGP), 126–174 (PQSQ…PPPM), and 390–459 (GSRN…SKST). The span at 153–165 (TDSSSADSDMTST) shows a compositional bias: low complexity. Positions 337–439 (NNGIHINNKV…NSKSKTARAH (103 aa)) are RNA-binding. The span at 440 to 456 (NVSTSNNSPSTDNDSIS) shows a compositional bias: low complexity. Asp-499 (for protease activity; shared with dimeric partner) is an active-site residue. Positions 621 to 678 (NVHTSESTRKYPYPFIHRMLAHANAQTIRYSLKNNTITYFNESDVDWSSAIDYQCPDC) are integrase-type zinc finger-like. An Integrase catalytic domain is found at 698-873 (NSYEPFQYLH…AGLDISTLLP (176 aa)). Positions 709 and 774 each coordinate Mg(2+). The segment at 996 to 1208 (AVSPTDSTPP…SSLGGIGDSN (213 aa)) is disordered. Residues 998–1007 (SPTDSTPPST) are compositionally biased toward low complexity. The span at 1043–1053 (STPQISDIEST) shows a compositional bias: polar residues. Residues 1076-1091 (ESSHASKSKDFRHSDS) are compositionally biased toward basic and acidic residues. Polar residues-rich tracts occupy residues 1092-1120 (YSDN…QTSE) and 1133-1144 (SIDTSSSESNSL). The Bipartite nuclear localization signal signature appears at 1216–1250 (KKRSLEDNETEIKVSRDTWNTKNMRSLEPPRSKKR). Positions 1376–1514 (NNYYITQLDI…DILGLEIKYQ (139 aa)) constitute a Reverse transcriptase Ty1/copia-type domain. Residues Asp-1384, Asp-1465, Asp-1466, Asp-1648, Glu-1690, and Asp-1723 each contribute to the Mg(2+) site. The 143-residue stretch at 1648–1790 (DASYGNQPYY…IKTFKLLTNK (143 aa)) folds into the RNase H Ty1/copia-type domain.

In terms of assembly, the capsid protein forms a homotrimer, from which the VLPs are assembled. The protease is a homodimer, whose active site consists of two apposed aspartic acid residues. In terms of processing, initially, virus-like particles (VLPs) are composed of the structural unprocessed proteins Gag and Gag-Pol, and also contain the host initiator methionine tRNA (tRNA(i)-Met) which serves as a primer for minus-strand DNA synthesis, and a dimer of genomic Ty RNA. Processing of the polyproteins occurs within the particle and proceeds by an ordered pathway, called maturation. First, the protease (PR) is released by autocatalytic cleavage of the Gag-Pol polyprotein yielding capsid protein p45 and a Pol-p154 precursor protein. This cleavage is a prerequisite for subsequent processing of Pol-p154 at the remaining sites to release the mature structural and catalytic proteins. Maturation takes place prior to the RT reaction and is required to produce transposition-competent VLPs.

The protein resides in the cytoplasm. It is found in the nucleus. It catalyses the reaction DNA(n) + a 2'-deoxyribonucleoside 5'-triphosphate = DNA(n+1) + diphosphate. The enzyme catalyses Endonucleolytic cleavage to 5'-phosphomonoester.. In terms of biological role, capsid protein (CA) is the structural component of the virus-like particle (VLP), forming the shell that encapsulates the retrotransposons dimeric RNA genome. The particles are assembled from trimer-clustered units and there are holes in the capsid shells that allow for the diffusion of macromolecules. CA also has nucleocapsid-like chaperone activity, promoting primer tRNA(i)-Met annealing to the multipartite primer-binding site (PBS), dimerization of Ty1 RNA and initiation of reverse transcription. The aspartyl protease (PR) mediates the proteolytic cleavages of the Gag and Gag-Pol polyproteins after assembly of the VLP. Its function is as follows. Reverse transcriptase/ribonuclease H (RT) is a multifunctional enzyme that catalyzes the conversion of the retro-elements RNA genome into dsDNA within the VLP. The enzyme displays a DNA polymerase activity that can copy either DNA or RNA templates, and a ribonuclease H (RNase H) activity that cleaves the RNA strand of RNA-DNA heteroduplexes during plus-strand synthesis and hydrolyzes RNA primers. The conversion leads to a linear dsDNA copy of the retrotransposon that includes long terminal repeats (LTRs) at both ends. Functionally, integrase (IN) targets the VLP to the nucleus, where a subparticle preintegration complex (PIC) containing at least integrase and the newly synthesized dsDNA copy of the retrotransposon must transit the nuclear membrane. Once in the nucleus, integrase performs the integration of the dsDNA into the host genome. The polypeptide is Transposon Ty1-H Gag-Pol polyprotein (TY1B-H) (Saccharomyces cerevisiae (strain ATCC 204508 / S288c) (Baker's yeast)).